Consider the following 497-residue polypeptide: Glycerol kinase (497 aa).

Thr-12 provides a ligand contact to ADP. ATP-binding residues include Thr-12, Thr-13, and Ser-14. Residue Thr-12 participates in sn-glycerol 3-phosphate binding. Arg-16 is an ADP binding site. Residues Arg-82, Glu-83, Tyr-134, and Asp-243 each contribute to the sn-glycerol 3-phosphate site. Residues Arg-82, Glu-83, Tyr-134, Asp-243, and Gln-244 each contribute to the glycerol site. Thr-265 and Gly-308 together coordinate ADP. The ATP site is built by Thr-265, Gly-308, Gln-312, and Gly-409. Residues Gly-409 and Asn-413 each contribute to the ADP site.

This sequence belongs to the FGGY kinase family.

The enzyme catalyses glycerol + ATP = sn-glycerol 3-phosphate + ADP + H(+). Its pathway is polyol metabolism; glycerol degradation via glycerol kinase pathway; sn-glycerol 3-phosphate from glycerol: step 1/1. Its activity is regulated as follows. Inhibited by fructose 1,6-bisphosphate (FBP). Functionally, key enzyme in the regulation of glycerol uptake and metabolism. Catalyzes the phosphorylation of glycerol to yield sn-glycerol 3-phosphate. The protein is Glycerol kinase of Solidesulfovibrio magneticus (strain ATCC 700980 / DSM 13731 / RS-1) (Desulfovibrio magneticus).